A 514-amino-acid chain; its full sequence is Pantothenate transporter liz1 (514 aa).

The next 12 helical transmembrane spans lie at 24 to 44, 72 to 92, 98 to 118, 128 to 148, 159 to 179, 194 to 214, 263 to 283, 300 to 320, 329 to 349, 357 to 377, 390 to 410, and 423 to 443; these read LLIKIDWFILSYCCVSYFINY, INVVFTCGYIIGQLPGSYALQ, LWFSVMNILWGLMTIFSFAVH, FFMAVAEASTFAGTHYILGAW, GIFSASGLVGTMFAGYLQTAV, WLFIIDGILTIPLSLYGLFLF, GLCILWIFSGETQAIAVNVLM, NYPTVITAVGVVSTLGASVIS, WPFGLFLCVITTVSATILLAW, FFAYFASGCTYAGQAVWFSWA, VVVFLMNMCQNIWHIWWAPIM, and LIGLLVVGGIVFVSSCIVSYM.

This sequence belongs to the major facilitator superfamily. Allantoate permease family.

The protein localises to the cell membrane. Its function is as follows. Transports pantothenate into the cell. This Schizosaccharomyces pombe (strain 972 / ATCC 24843) (Fission yeast) protein is Pantothenate transporter liz1 (liz1).